Here is a 142-residue protein sequence, read N- to C-terminus: Hemoglobin subunit alpha-A (142 aa).

A Globin domain is found at 2 to 142 (VLSAADKTNV…VATVLTAKYR (141 aa)). H59 serves as a coordination point for O2. H88 is a binding site for heme b.

The protein belongs to the globin family. As to quaternary structure, heterotetramer of two alpha chains and two beta chains. Red blood cells.

Its function is as follows. Involved in oxygen transport from the lung to the various peripheral tissues. The sequence is that of Hemoglobin subunit alpha-A (HBAA) from Apus apus (Common swift).